The primary structure comprises 464 residues: Tyrosine aminotransferase (464 aa).

N6-(pyridoxal phosphate)lysine is present on Lys-284.

The protein belongs to the class-I pyridoxal-phosphate-dependent aminotransferase family. As to quaternary structure, homodimer. Pyridoxal 5'-phosphate serves as cofactor. As to expression, expressed in the muscle. Expressed in the hypodermis and intestine.

It carries out the reaction L-tyrosine + 2-oxoglutarate = 3-(4-hydroxyphenyl)pyruvate + L-glutamate. The enzyme catalyses 3-hydroxy-L-phenylalanine + 2-oxoglutarate = 3-(3-hydroxyphenyl)pyruvate + L-glutamate. It participates in amino-acid degradation; L-phenylalanine degradation; acetoacetate and fumarate from L-phenylalanine: step 2/6. In terms of biological role, transaminase involved in tyrosine breakdown. Converts tyrosine to p-hydroxyphenylpyruvate. Has no transaminase activity towards phenylalanine. Plays protective role against oxidative stress, metabolizing meta-tyrosine and negatively regulating its accumulation. Plays a role in modulating the daf-2/insulin receptor-like transduction pathway through regulating tyrosine levels. Negatively regulates dauer formation. Plays a role in longevity. This chain is Tyrosine aminotransferase, found in Caenorhabditis elegans.